The primary structure comprises 513 residues: Glutamate--tRNA ligase 2 (513 aa).

The short motif at 11 to 21 is the 'HIGH' region element; sequence PSPSGFLHIGS. Residues 240 to 244 carry the 'KMSKS' region motif; it reads KLSKR. K243 is an ATP binding site.

This sequence belongs to the class-I aminoacyl-tRNA synthetase family. Glutamate--tRNA ligase type 1 subfamily. In terms of assembly, monomer.

Its subcellular location is the cytoplasm. It catalyses the reaction tRNA(Glu) + L-glutamate + ATP = L-glutamyl-tRNA(Glu) + AMP + diphosphate. In terms of biological role, catalyzes the attachment of glutamate to tRNA(Glu) in a two-step reaction: glutamate is first activated by ATP to form Glu-AMP and then transferred to the acceptor end of tRNA(Glu). This Rickettsia massiliae (strain Mtu5) protein is Glutamate--tRNA ligase 2.